Reading from the N-terminus, the 308-residue chain is Glutathione synthetase (308 aa).

Residues 117 to 300 (KLLPLSFPKF…LERDCWDYFE (184 aa)) form the ATP-grasp domain. 143–198 (YAEYGDIVLKPLYDYGGNGVCRICGRADVGAISSAMVERYEAPLVAQQFIDDISSD) provides a ligand contact to ATP. Mg(2+)-binding residues include glutamate 271 and asparagine 273.

It belongs to the prokaryotic GSH synthase family. It depends on Mg(2+) as a cofactor. Mn(2+) is required as a cofactor.

The enzyme catalyses gamma-L-glutamyl-L-cysteine + glycine + ATP = glutathione + ADP + phosphate + H(+). The protein operates within sulfur metabolism; glutathione biosynthesis; glutathione from L-cysteine and L-glutamate: step 2/2. This Anaplasma centrale protein is Glutathione synthetase.